The primary structure comprises 346 residues: Dehydrogenase azaJ (346 aa).

Residue 43–48 (VDYATQ) coordinates NADP(+). 133 to 140 (LAFSTAIV) contributes to the substrate binding site. NADP(+) contacts are provided by residues 170-173 (ATSV), 193-196 (SPHN), Y211, and 251-252 (LN). Substrate is bound at residue 269–273 (APPNV). 336-337 (VS) is an NADP(+) binding site.

The protein belongs to the zinc-containing alcohol dehydrogenase family.

It participates in secondary metabolite biosynthesis. In terms of biological role, dehydrogenase; part of the gene cluster that mediates the biosynthesis of azaphilones, a class of fungal metabolites characterized by a highly oxygenated pyrano-quinone bicyclic core and exhibiting a broad range of bioactivities. In the first step, the non-reducing polyketide synthase azaA forms the hexaketide precursor from successive condensations of five malonyl-CoA units, presumably with a simple acetyl-CoA starter unit. The reactive polyketide chain then undergoes a PT-mediated C2-C7 cyclization to afford the aromatic ring and is eventually released as an aldehyde through the R-domain. The putative ketoreductase azaE is proposed to catalyze the reduction of the terminal ketone resulting in the early culture product FK17-P2a. The monooxygenase azaH was demonstrated to be the only enzyme required to convert FK17-P2a to azanigerone E. AzaH first hydroxylates the benzaldehyde intermediate FK17-P2a at C4, which triggers the formation of the pyran-ring to afford azanigerone E. In parallel, the 2,4-dimethylhexanoyl chain is synthesized by the HR-PKS azaB and is proposed to be transferred to the C4-hydroxyl of azanigerone E by the acyltransferase azaD directly from the ACP domain of azaB. Alternatively, the 2,4-dimethyl-hexanoyl chain may be offloaded from the HR-PKS as a carboxylic acid and converted to an acyl-CoA by azaF. The resulting acyl-CoA molecule could then be taken up as a substrate by AzaD to form azanigerone B. To yield the carboxylic acid substituent in azanigerone A, the hydroxypropyl side chain of azanigerone B would need to undergo a C-C oxidative cleavage catalyzed by cytochrome P450 AzaI. AzaI is proposed to act on a vicinal diol that leads to a C-C bond scission either through an alkoxyradical intermediate or a peroxy complex. In the biosynthesis of azanigerone A, azanigerone B first undergoes hydroxylation at C10, possibly catalyzed by one of the two FAD-dependent monooxygenases encoded in the cluster, azaG or azaL, resulting in the vicinal diol azanigerone C. Oxidative cleavage of azanigerone C by azaI would yield the corresponding aldehyde derivative of azanigerone A. Finally, the dehydrogenase azaJ is proposed to convert the aldehyde functional group into the carboxylic acid, completing the conversion from azanigerone B to azanigerone A. Alternatively, the oxidation of aldehyde to carboxylic acid may be catalyzed by the same P450 enzyme azaI via consecutive oxidation or by endogenous alcohol dehydrogenase. This is Dehydrogenase azaJ from Aspergillus niger (strain ATCC 1015 / CBS 113.46 / FGSC A1144 / LSHB Ac4 / NCTC 3858a / NRRL 328 / USDA 3528.7).